We begin with the raw amino-acid sequence, 610 residues long: DNA mismatch repair protein MutL (610 aa).

It belongs to the DNA mismatch repair MutL/HexB family.

Functionally, this protein is involved in the repair of mismatches in DNA. It is required for dam-dependent methyl-directed DNA mismatch repair. May act as a 'molecular matchmaker', a protein that promotes the formation of a stable complex between two or more DNA-binding proteins in an ATP-dependent manner without itself being part of a final effector complex. The protein is DNA mismatch repair protein MutL of Rickettsia canadensis (strain McKiel).